The primary structure comprises 67 residues: uncharacterized protein (67 aa).

A helical membrane pass occupies residues 12–34 (YYYAHQTVCITSTGFALCFVVQA).

It is found in the membrane. This is an uncharacterized protein from Saccharomyces cerevisiae (strain ATCC 204508 / S288c) (Baker's yeast).